Consider the following 30-residue polypeptide: Nattererin-1 (30 aa).

As to expression, expressed by the skin glands.

Its subcellular location is the secreted. Its function is as follows. Probably has antibacterial activity. The polypeptide is Nattererin-1 (Physalaemus nattereri (Cuyaba dwarf frog)).